We begin with the raw amino-acid sequence, 440 residues long: Xaa-Pro dipeptidase (440 aa).

Positions 244, 255, 335, 380, and 419 each coordinate Mn(2+).

Belongs to the peptidase M24B family. Bacterial-type prolidase subfamily. It depends on Mn(2+) as a cofactor.

It catalyses the reaction Xaa-L-Pro dipeptide + H2O = an L-alpha-amino acid + L-proline. Its function is as follows. Splits dipeptides with a prolyl residue in the C-terminal position. The chain is Xaa-Pro dipeptidase from Shewanella baltica (strain OS185).